A 108-amino-acid polypeptide reads, in one-letter code: Large ribosomal subunit protein uL23 (108 aa).

Belongs to the universal ribosomal protein uL23 family. As to quaternary structure, part of the 50S ribosomal subunit. Contacts protein L29, and trigger factor when it is bound to the ribosome.

Functionally, one of the early assembly proteins it binds 23S rRNA. One of the proteins that surrounds the polypeptide exit tunnel on the outside of the ribosome. Forms the main docking site for trigger factor binding to the ribosome. The sequence is that of Large ribosomal subunit protein uL23 from Mycoplasmoides gallisepticum (strain R(low / passage 15 / clone 2)) (Mycoplasma gallisepticum).